A 208-amino-acid chain; its full sequence is Large ribosomal subunit protein bL25 (208 aa).

Positions 186-201 are enriched in low complexity; it reads PAGEKSAAAEEGAAAA. Residues 186-208 are disordered; that stretch reads PAGEKSAAAEEGAAAAGEDKPAA.

This sequence belongs to the bacterial ribosomal protein bL25 family. CTC subfamily. Part of the 50S ribosomal subunit; part of the 5S rRNA/L5/L18/L25 subcomplex. Contacts the 5S rRNA. Binds to the 5S rRNA independently of L5 and L18.

Functionally, this is one of the proteins that binds to the 5S RNA in the ribosome where it forms part of the central protuberance. This is Large ribosomal subunit protein bL25 from Ralstonia pickettii (strain 12J).